We begin with the raw amino-acid sequence, 122 residues long: Large ribosomal subunit protein uL14c (122 aa).

It belongs to the universal ribosomal protein uL14 family. In terms of assembly, part of the 50S ribosomal subunit.

The protein localises to the plastid. It localises to the chloroplast. In terms of biological role, binds to 23S rRNA. The chain is Large ribosomal subunit protein uL14c from Carica papaya (Papaya).